Consider the following 146-residue polypeptide: Large ribosomal subunit protein uL13 (146 aa).

The protein belongs to the universal ribosomal protein uL13 family. Part of the 50S ribosomal subunit.

This protein is one of the early assembly proteins of the 50S ribosomal subunit, although it is not seen to bind rRNA by itself. It is important during the early stages of 50S assembly. This chain is Large ribosomal subunit protein uL13, found in Methylobacillus flagellatus (strain ATCC 51484 / DSM 6875 / VKM B-1610 / KT).